The sequence spans 139 residues: Putative pre-16S rRNA nuclease (139 aa).

The protein belongs to the YqgF nuclease family.

The protein localises to the cytoplasm. Its function is as follows. Could be a nuclease involved in processing of the 5'-end of pre-16S rRNA. The protein is Putative pre-16S rRNA nuclease of Pectobacterium carotovorum subsp. carotovorum (strain PC1).